The chain runs to 447 residues: Trigger factor (447 aa).

The PPIase FKBP-type domain maps to 188–273 (GDKLVIDFEG…VNDIQVAEDF (86 aa)).

Belongs to the FKBP-type PPIase family. Tig subfamily.

The protein resides in the cytoplasm. The enzyme catalyses [protein]-peptidylproline (omega=180) = [protein]-peptidylproline (omega=0). Involved in protein export. Acts as a chaperone by maintaining the newly synthesized protein in an open conformation. Functions as a peptidyl-prolyl cis-trans isomerase. In Wolbachia sp. subsp. Brugia malayi (strain TRS), this protein is Trigger factor.